Here is a 399-residue protein sequence, read N- to C-terminus: Ectoine hydrolase (399 aa).

Belongs to the peptidase M24 family.

It is found in the cytoplasm. The enzyme catalyses L-ectoine + H2O = (2S)-2-acetamido-4-aminobutanoate. Functionally, involved in the degradation of ectoine, which allows H.elongata to utilize ectoine as both a carbon and a nitrogen source for growth. Catalyzes the hydrolysis of ectoine to N-acetyl-L-2,4-diaminobutyric acid (N-Ac-DABA). It can produce both isoforms N-gamma-acetyl-L-2,4-diaminobutyric acid (N-gamma-Ac-DABA) and N-alpha-acetyl-L-2,4-diaminobutyric acid (-Nalpha-Ac-DABA), however N-alpha-Ac-DABA is the essential substrate for the subsequent catabolic enzyme DoeB. The polypeptide is Ectoine hydrolase (Halomonas elongata (strain ATCC 33173 / DSM 2581 / NBRC 15536 / NCIMB 2198 / 1H9)).